The primary structure comprises 438 residues: ATP synthase subunit alpha, chloroplastic (438 aa).

170 to 177 (GDRQTGKT) is an ATP binding site.

The protein belongs to the ATPase alpha/beta chains family. F-type ATPases have 2 components, CF(1) - the catalytic core - and CF(0) - the membrane proton channel. CF(1) has five subunits: alpha(3), beta(3), gamma(1), delta(1), epsilon(1). CF(0) has four main subunits: a, b, b' and c.

It is found in the plastid. The protein localises to the chloroplast thylakoid membrane. The enzyme catalyses ATP + H2O + 4 H(+)(in) = ADP + phosphate + 5 H(+)(out). Functionally, produces ATP from ADP in the presence of a proton gradient across the membrane. The alpha chain is a regulatory subunit. This Ochrosphaera neapolitana protein is ATP synthase subunit alpha, chloroplastic.